Consider the following 129-residue polypeptide: Large ribosomal subunit protein bL12 (129 aa).

It belongs to the bacterial ribosomal protein bL12 family. Homodimer. Part of the ribosomal stalk of the 50S ribosomal subunit. Forms a multimeric L10(L12)X complex, where L10 forms an elongated spine to which 2 to 4 L12 dimers bind in a sequential fashion. Binds GTP-bound translation factors.

Functionally, forms part of the ribosomal stalk which helps the ribosome interact with GTP-bound translation factors. Is thus essential for accurate translation. The chain is Large ribosomal subunit protein bL12 from Protochlamydia amoebophila (strain UWE25).